Reading from the N-terminus, the 403-residue chain is Serine/threonine transporter SstT (403 aa).

The next 9 membrane-spanning stretches (helical) occupy residues 14–34 (VTQIVIGLLAGIALALLAPAI), 44–64 (VFVSALKAVAPVLVFILVMAS), 79–99 (ILWLYLLGTFAAAVVAVFASM), 138–158 (ALLNANFIGVLTWAIGLGVAL), 175–195 (GVTLIVRVVIRFAPLGIFGLV), 214–234 (LAVLIGCMLFVALVMNPLIVF), 295–315 (MAGAAITITVLTLAAVHTLGI), 327–347 (VVAAVCACGASGVAGGSLLLI), and 353–373 (LFGIPSEIAMQVVAVGFIIGV).

This sequence belongs to the dicarboxylate/amino acid:cation symporter (DAACS) (TC 2.A.23) family.

The protein localises to the cell inner membrane. The enzyme catalyses L-serine(in) + Na(+)(in) = L-serine(out) + Na(+)(out). The catalysed reaction is L-threonine(in) + Na(+)(in) = L-threonine(out) + Na(+)(out). Functionally, involved in the import of serine and threonine into the cell, with the concomitant import of sodium (symport system). This is Serine/threonine transporter SstT from Pseudomonas putida (strain ATCC 47054 / DSM 6125 / CFBP 8728 / NCIMB 11950 / KT2440).